The sequence spans 112 residues: Cryptic phage CTXphi transcriptional repressor RstR (112 aa).

The 55-residue stretch at 7–61 (LANQRKAINKTQAQMADEIGISLTSYKKYESGEGLPTMENLVKIADALEISIDEL) folds into the HTH cro/C1-type domain. The segment at residues 18 to 37 (QAQMADEIGISLTSYKKYES) is a DNA-binding region (H-T-H motif).

Its function is as follows. Transcriptional repressor of the integrated CTXPhi phage gene rstA2. The polypeptide is Cryptic phage CTXphi transcriptional repressor RstR (rstR1) (Vibrio cholerae serotype O1 (strain ATCC 39315 / El Tor Inaba N16961)).